We begin with the raw amino-acid sequence, 855 residues long: RE1-silencing transcription factor (855 aa).

The C2H2-type 1 zinc finger occupies 141–163 (FFCKPCQYQGENEQEFIVHIRTH). The tract at residues 172–199 (NGGDSDEDLSADAGPQTSVPNAESAESN) is disordered. A compositionally biased stretch (polar residues) spans 186-199 (PQTSVPNAESAESN). 7 consecutive C2H2-type zinc fingers follow at residues 204–226 (IRCE…LKHH), 236–258 (FKCT…LRNH), 264–286 (FTCS…IRTH), 292–314 (FQCI…MRTH), 320–343 (FKCD…RQVH), 349–371 (LSCP…VELH), and 377–400 (FLCP…KSRH). Positions 458 to 811 (NAVVETEKSS…ETPTEERDAS (354 aa)) are disordered. 3 stretches are compositionally biased toward basic and acidic residues: residues 462 to 472 (ETEKSSKKNMD), 481 to 496 (NEKK…EKTA), and 504 to 535 (AVKD…EKAL). The span at 548 to 569 (SSVQQQSDDCEQTQHTPQQNET) shows a compositional bias: polar residues. The span at 570–580 (QENRPEKENRS) shows a compositional bias: basic and acidic residues. Positions 594–604 (QTKKPCKKQTK) are enriched in basic residues. Positions 628–638 (RKAENPAEPKQ) are enriched in basic and acidic residues. Residues 639–648 (RIKRTKKKKD) show a composition bias toward basic residues. Positions 652-662 (PTTSEANQTNP) are enriched in polar residues. 2 stretches are compositionally biased toward basic and acidic residues: residues 711–721 (PAVEDVQRPLE) and 799–811 (KLPE…RDAS). The segment at 818-840 (HTCIFCDRSFALEMDYRKHLNRH) adopts a C2H2-type 9 zinc-finger fold.

Its subcellular location is the nucleus. The protein resides in the cytoplasm. Functionally, transcriptional repressor which binds neuron-restrictive silencer element (NRSE) and represses neuronal gene transcription in non-neuronal cells. The protein is RE1-silencing transcription factor (rest) of Danio rerio (Zebrafish).